We begin with the raw amino-acid sequence, 421 residues long: E3 ubiquitin-protein ligase MARCHF4 (421 aa).

Positions 1 to 16 are cleaved as a signal peptide; that stretch reads MLLAIGVIVWCWGLLS. Residues 60 to 79 are disordered; sequence ELNAEGNATSSATESHSLAN. Positions 65-77 are enriched in polar residues; that stretch reads GNATSSATESHSL. The segment at 135-195 adopts an RING-CH-type zinc-finger fold; sequence DSGVRTPLCR…ELCYYKYQVI (61 aa). Residues C143, C146, C159, C161, H169, C172, C185, and C188 each contribute to the Zn(2+) site. 2 helical membrane passes run 218 to 238 and 252 to 272; these read IAAA…LVWS and LFQI…ALIV. 2 disordered regions span residues 319–385 and 401–421; these read PLTH…LPDH and QEPR…VTTV. 2 stretches are compositionally biased toward polar residues: residues 367–380 and 403–412; these read TEPQ…NGQP and PRGQTSNSNR.

It is found in the golgi apparatus membrane. It carries out the reaction S-ubiquitinyl-[E2 ubiquitin-conjugating enzyme]-L-cysteine + [acceptor protein]-L-lysine = [E2 ubiquitin-conjugating enzyme]-L-cysteine + N(6)-ubiquitinyl-[acceptor protein]-L-lysine.. Its pathway is protein modification; protein ubiquitination. In terms of biological role, E3 ubiquitin-protein ligase. E3 ubiquitin ligases accept ubiquitin from an E2 ubiquitin-conjugating enzyme in the form of a thioester and then directly transfer the ubiquitin to targeted substrates. In Danio rerio (Zebrafish), this protein is E3 ubiquitin-protein ligase MARCHF4 (marchf4).